Here is a 970-residue protein sequence, read N- to C-terminus: uncharacterized protein (970 aa).

Residues 12–32 (VIFFSVFFVIFFLFIESSVGF) traverse the membrane as a helical segment.

The protein to E.coli YtfN.

It is found in the membrane. This is an uncharacterized protein from Buchnera aphidicola subsp. Acyrthosiphon pisum (strain APS) (Acyrthosiphon pisum symbiotic bacterium).